The primary structure comprises 468 residues: MSSSLWLQCLQRLQEELPSAEFSMWVRPLQAELNDNTLTLFAPNRFVLDWVRDKYLNSINSLLNEFCGGDIPTLRFEVGSKPISAPPRPQRTAADVAAATSAPAQMQARQSLHKPWESRGPEPVDDLNHRSNVNPKHKFTNFVEGKSNQLGLAAARQVSDNPGTAYNPLFLYGGTGLGKTHLLQAVGNAILERKPNAKVVYMHSERFVQDMVKALQNNAIEEFKCYYRSVDALLIDDIQFFANKERSQEEFFHTFNALLEGNQQIILTSDRYPKEINGVEDRLKSRFGWGLTVAIEPPELETRVAILMKKAEDHQIHLADEVAFFIAKRLRSNVRELEGALNRVVANANFTGRAITIDFVREALRDLLALQEKLVTIDNIQKTVAEYYKIKMADLLSKRRSRSVARPRQLAMALSKELTNHSLPEIGDAFGGRDHTTVLHACRKIAQLREESHDIKEDYSNLIRTLSS.

The tract at residues 1–84 is domain I, interacts with DnaA modulators; the sequence is MSSSLWLQCL…RFEVGSKPIS (84 aa). The segment at 84 to 131 is domain II; it reads SAPPRPQRTAADVAAATSAPAQMQARQSLHKPWESRGPEPVDDLNHRS. A disordered region spans residues 112-132; that stretch reads LHKPWESRGPEPVDDLNHRSN. A compositionally biased stretch (basic and acidic residues) spans 114–129; that stretch reads KPWESRGPEPVDDLNH. The domain III, AAA+ region stretch occupies residues 132-348; that stretch reads NVNPKHKFTN…GALNRVVANA (217 aa). ATP-binding residues include glycine 176, glycine 178, lysine 179, and threonine 180. The domain IV, binds dsDNA stretch occupies residues 349 to 468; the sequence is NFTGRAITID…YSNLIRTLSS (120 aa).

It belongs to the DnaA family. Oligomerizes as a right-handed, spiral filament on DNA at oriC.

It is found in the cytoplasm. Functionally, plays an essential role in the initiation and regulation of chromosomal replication. ATP-DnaA binds to the origin of replication (oriC) to initiate formation of the DNA replication initiation complex once per cell cycle. Binds the DnaA box (a 9 base pair repeat at the origin) and separates the double-stranded (ds)DNA. Forms a right-handed helical filament on oriC DNA; dsDNA binds to the exterior of the filament while single-stranded (ss)DNA is stabiized in the filament's interior. The ATP-DnaA-oriC complex binds and stabilizes one strand of the AT-rich DNA unwinding element (DUE), permitting loading of DNA polymerase. After initiation quickly degrades to an ADP-DnaA complex that is not apt for DNA replication. Binds acidic phospholipids. In Aliivibrio salmonicida (strain LFI1238) (Vibrio salmonicida (strain LFI1238)), this protein is Chromosomal replication initiator protein DnaA.